An 832-amino-acid polypeptide reads, in one-letter code: Prickle-like protein 1-B (832 aa).

A PET domain is found at 14–122; the sequence is FGCQRSSTSD…NIKMLSRAVM (109 aa). LIM zinc-binding domains are found at residues 124-188, 189-249, and 250-313; these read AMCE…ELLK, PRCS…HYAE, and YCES…EDVH. 4 disordered regions span residues 312–346, 428–455, 602–701, and 766–832; these read VHAS…ADQC, QQPS…QRNN, ICQE…KERN, and CSSS…CIIS. Basic and acidic residues-rich tracts occupy residues 432-453 and 603-614; these read EDNR…DLQR and CQEKPPPEEKPM. Composition is skewed to basic residues over residues 669 to 680 and 816 to 832; these read RPHHHRRRKSRK and TKSK…CIIS. A Cysteine methyl ester modification is found at Cys829. Cys829 carries the S-farnesyl cysteine lipid modification. The propeptide at 830–832 is removed in mature form; sequence IIS.

This sequence belongs to the prickle / espinas / testin family. Interacts with dvl2/dsh and mapk8/jnk1. As to expression, expressed in the dorsal marginal zone of early gastrulae (stage 10). As gastrulation proceeds, expression expands to include the lateral and ventral marginal zones, excluding the few rows of cells above the blastopore lip. Expression moves dorsally with gastrulation cell movements, and by the end of gastrulation expression is seen in dorsal mesoderm and posterior but not anterior neural ectoderm. Expression becomes down-regulated in mesoderm but remains strong in posterior ectoderm through the neurula stages. During tailbud stages, expressed in the pronephric duct, tailbud, tailtip and forming somites. In the most posterior regions, expressed in notochord and in the floorplate of the neural tube with weak expression in the roofplate. At stage 30, expressed in a complex pattern in the head including strong expression in the lens and otic vesicle.

Its subcellular location is the cell membrane. In terms of biological role, acts in a planar cell polarity (PCP) complex; polarization along the apical/basal axis of epithelial cells. Regulates the polarized assembly of fibronectrin on the surface of the mesoderm during gastrulation. Essential for gastrulation cell movements, cooperating with dvl2/dsh to activate jnk. Acts together with tes to control axial elongation. In Xenopus laevis (African clawed frog), this protein is Prickle-like protein 1-B (prickle1-b).